A 211-amino-acid chain; its full sequence is tRNA (guanine-N(7)-)-methyltransferase (211 aa).

S-adenosyl-L-methionine contacts are provided by D40, E65, N92, and D117. The active site involves D117. K121 is a binding site for substrate. The interval 123–128 is interaction with RNA; the sequence is RHNKRR. D153 contacts substrate.

This sequence belongs to the class I-like SAM-binding methyltransferase superfamily. TrmB family.

It catalyses the reaction guanosine(46) in tRNA + S-adenosyl-L-methionine = N(7)-methylguanosine(46) in tRNA + S-adenosyl-L-homocysteine. It participates in tRNA modification; N(7)-methylguanine-tRNA biosynthesis. In terms of biological role, catalyzes the formation of N(7)-methylguanine at position 46 (m7G46) in tRNA. The polypeptide is tRNA (guanine-N(7)-)-methyltransferase (Synechocystis sp. (strain ATCC 27184 / PCC 6803 / Kazusa)).